The chain runs to 344 residues: MTDSDPTLRPDRLPEDVQATDDRALRPQSLDDFTGQEEARANLRVFIESARRRGEAMDHVLFHGPPGLGKTTLAQIMAKELGVGFRMTSGPVLAKAGDLAAILTNLEAKDVLFIDEIHRLNPVVEEILYPALEDFELDLVIGEGPAARTVRIELQPFTLVGATTRLGLLTTPLRDRFGIPTRLNFYTIAELDQIVARGARLAGIEADPKGTAEIAKRARGTPRIAGRLLRRVIDFAVVEGDGRLTQGIADSALTRLGVDDLGLDGADRRYLSLIAENYHGGPVGIETVAAALAEPRDALEEVIEPFLLQQGLIARTPRGRMLAHKGWTHLGMAPPKRPDQGELI.

Residues 1–25 are compositionally biased toward basic and acidic residues; sequence MTDSDPTLRPDRLPEDVQATDDRAL. The disordered stretch occupies residues 1-33; sequence MTDSDPTLRPDRLPEDVQATDDRALRPQSLDDF. A large ATPase domain (RuvB-L) region spans residues 1-186; it reads MTDSDPTLRP…FGIPTRLNFY (186 aa). ATP contacts are provided by residues leucine 25, arginine 26, glycine 67, lysine 70, threonine 71, threonine 72, 133–135, arginine 176, tyrosine 186, and arginine 223; that span reads EDF. Position 71 (threonine 71) interacts with Mg(2+). A small ATPAse domain (RuvB-S) region spans residues 187 to 257; that stretch reads TIAELDQIVA…IADSALTRLG (71 aa). The segment at 260-344 is head domain (RuvB-H); that stretch reads DLGLDGADRR…PKRPDQGELI (85 aa). Positions 296, 315, and 320 each coordinate DNA.

It belongs to the RuvB family. Homohexamer. Forms an RuvA(8)-RuvB(12)-Holliday junction (HJ) complex. HJ DNA is sandwiched between 2 RuvA tetramers; dsDNA enters through RuvA and exits via RuvB. An RuvB hexamer assembles on each DNA strand where it exits the tetramer. Each RuvB hexamer is contacted by two RuvA subunits (via domain III) on 2 adjacent RuvB subunits; this complex drives branch migration. In the full resolvosome a probable DNA-RuvA(4)-RuvB(12)-RuvC(2) complex forms which resolves the HJ.

It is found in the cytoplasm. The catalysed reaction is ATP + H2O = ADP + phosphate + H(+). Its function is as follows. The RuvA-RuvB-RuvC complex processes Holliday junction (HJ) DNA during genetic recombination and DNA repair, while the RuvA-RuvB complex plays an important role in the rescue of blocked DNA replication forks via replication fork reversal (RFR). RuvA specifically binds to HJ cruciform DNA, conferring on it an open structure. The RuvB hexamer acts as an ATP-dependent pump, pulling dsDNA into and through the RuvAB complex. RuvB forms 2 homohexamers on either side of HJ DNA bound by 1 or 2 RuvA tetramers; 4 subunits per hexamer contact DNA at a time. Coordinated motions by a converter formed by DNA-disengaged RuvB subunits stimulates ATP hydrolysis and nucleotide exchange. Immobilization of the converter enables RuvB to convert the ATP-contained energy into a lever motion, pulling 2 nucleotides of DNA out of the RuvA tetramer per ATP hydrolyzed, thus driving DNA branch migration. The RuvB motors rotate together with the DNA substrate, which together with the progressing nucleotide cycle form the mechanistic basis for DNA recombination by continuous HJ branch migration. Branch migration allows RuvC to scan DNA until it finds its consensus sequence, where it cleaves and resolves cruciform DNA. This chain is Holliday junction branch migration complex subunit RuvB, found in Jannaschia sp. (strain CCS1).